The primary structure comprises 541 residues: MKSFKIALAQFSPHIGNIDSNAQRMVEQANEAKKQNADLIIFPELSVIGYPAEDLLLRPNLNKRMQKAFQQLKEVKDIVMVFGFVHQTEEGHRYNSAAVMKDGVVLGVYNKHNLPNYSVFDEKRYFSPGHQHLVFEYLGHKFGVLICEDIWSINTVKQLSKLNVETVLVLNASPYEVGKPQHRVQTLTELSKQLNVHLVYLNQVGGQDDLIFDGSSFIINHDGEVAFQAPSFKEELYYSEFDIEQKRYKKIDPAPALDTIAEIYQSLVMATRDYVQRSGFSGVILGLSGGIDSALTLAIAADAIGADKVQAVMMPYTYTSQISVEDATEQARRMGVTFGIAEIHPIVNSFMQTLYPFFGNAPADATEENLQARARGTLLMGLSNKFGNLVLSTGNKSELAVGYCTLYGDMVGGFAVLKDVYKTIVFELAKYRNTLSETPVIPERVITRPPSAELRPDQKDQDSLPAYDILDAILYAYIEEDQSQSDIIAKGFDKEVVEKVIRLVDRNEYKRRQGAIGPRISSRAFSRERRYPIVNGWRPDD.

One can recognise a CN hydrolase domain in the interval 4–243 (FKIALAQFSP…EELYYSEFDI (240 aa)). Glutamate 44 serves as the catalytic Proton acceptor; for glutaminase activity. Lysine 111 functions as the For glutaminase activity in the catalytic mechanism. Residue tyrosine 117 coordinates L-glutamine. Catalysis depends on cysteine 147, which acts as the Nucleophile; for glutaminase activity. L-glutamine is bound by residues serine 173 and lysine 179. ATP is bound at residue 286-293 (GLSGGIDS). Residue asparagine 369 participates in deamido-NAD(+) binding. Threonine 393 provides a ligand contact to ATP. The deamido-NAD(+) site is built by glutamate 398 and lysine 510.

In the C-terminal section; belongs to the NAD synthetase family.

The enzyme catalyses deamido-NAD(+) + L-glutamine + ATP + H2O = L-glutamate + AMP + diphosphate + NAD(+) + H(+). It participates in cofactor biosynthesis; NAD(+) biosynthesis; NAD(+) from deamido-NAD(+) (L-Gln route): step 1/1. Functionally, catalyzes the ATP-dependent amidation of deamido-NAD to form NAD. Uses L-glutamine as a nitrogen source. In vitro, can also use ammonia as donor with comparable specific activity, but cannot use nicotinate mononucleotide (NaMN) as substrate. In Acinetobacter baylyi (strain ATCC 33305 / BD413 / ADP1), this protein is Glutamine-dependent NAD(+) synthetase.